The following is a 690-amino-acid chain: F-box/LRR-repeat protein 5 (690 aa).

Positions 1–159 (MAPFPDEVDV…IKKKVIAQHC (159 aa)) are hemerythrin-like. Fe(3+) is bound by residues His15, His57, Glu58, Glu61, His80, His126, and Glu130. Residues 202 to 248 (STGITHLPPEVMLSIFSYLNPQELCRCSQVSTKWSQLAKTGSLWKHL) enclose the F-box domain. LRR repeat units follow at residues 340–364 (SSAV…LDLT), 365–392 (QTDI…DLSG), 393–418 (CEKI…QSGF), 478–507 (VWML…CVME), 575–606 (TTLP…SLSG), 607–634 (CYQI…NLSG), and 635–660 (CLTV…YFYY). [2Fe-2S] cluster is bound by residues Cys661, Cys675, Cys685, and Cys686.

Part of a SCF (SKP1-cullin-F-box) protein ligase complex. Interacts with ACO1/IRP1, IREB2/IRP2; the interaction depends on the [2Fe-2S] cluster. Interacts with DCTN1/p150-glued. It depends on [2Fe-2S] cluster as a cofactor. Post-translationally, polybiquitinated upon iron and oxygen depletion, leading to its degradation by the proteasome. Ubiquitination is regulated by the hemerythrin-like region that acts as an oxygen and iron sensor. Undergoes constitutive ubiquitin-dependent degradation at the steady state by HERC2. As to expression, ubiquitously expressed. Highly expressed in early embryogenesis with expression decreasing as the embryo progresses through development (E11 and E15).

The protein localises to the cytoplasm. Its subcellular location is the perinuclear region. It localises to the nucleus. Its pathway is protein modification; protein ubiquitination. An iron-sulfur cluster promotes IRP2 polyubiquitination and degradation in response to both iron and oxygen concentrations. Functionally, component of some SCF (SKP1-cullin-F-box) protein ligase complex that plays a central role in iron homeostasis by promoting the ubiquitination and subsequent degradation of IREB2/IRP2. The C-terminal domain of FBXL5 contains a redox-sensitive [2Fe-2S] cluster that, upon oxidation, promotes binding to IRP2 to effect its oxygen-dependent degradation. Under iron deficiency conditions, the N-terminal hemerythrin-like (Hr) region, which contains a diiron metal center, cannot bind iron and undergoes conformational changes that destabilize the FBXL5 protein and cause its ubiquitination and degradation. When intracellular iron levels start rising, the Hr region is stabilized. Additional increases in iron levels facilitate the assembly and incorporation of a redox active [2Fe-2S] cluster in the C-terminal domain. Only when oxygen level is high enough to maintain the cluster in its oxidized state can FBXL5 recruit IRP2 as a substrate for polyubiquination and degradation. Promotes ubiquitination and subsequent degradation of the dynactin complex component DCTN1. Within the nucleus, promotes the ubiquitination of SNAI1; preventing its interaction with DNA and promoting its degradation. Negatively regulates DNA damage response by mediating the ubiquitin-proteasome degradation of the DNA repair protein NABP2. This Mus musculus (Mouse) protein is F-box/LRR-repeat protein 5 (Fbxl5).